We begin with the raw amino-acid sequence, 370 residues long: Peptide chain release factor 1 (370 aa).

Glutamine 237 is subject to N5-methylglutamine. Over residues glutamate 286–arginine 296 the composition is skewed to basic and acidic residues. The interval glutamate 286–arginine 310 is disordered.

The protein belongs to the prokaryotic/mitochondrial release factor family. Post-translationally, methylated by PrmC. Methylation increases the termination efficiency of RF1.

It is found in the cytoplasm. Peptide chain release factor 1 directs the termination of translation in response to the peptide chain termination codons UAG and UAA. This Anaeromyxobacter dehalogenans (strain 2CP-C) protein is Peptide chain release factor 1.